The sequence spans 208 residues: Sec-independent protein translocase protein TatB (208 aa).

The helical transmembrane segment at methionine 1–glycine 21 threads the bilayer. A disordered region spans residues aspartate 188–proline 208.

The protein belongs to the TatB family. The Tat system comprises two distinct complexes: a TatABC complex, containing multiple copies of TatA, TatB and TatC subunits, and a separate TatA complex, containing only TatA subunits. Substrates initially bind to the TatABC complex, which probably triggers association of the separate TatA complex to form the active translocon.

The protein localises to the cell inner membrane. Its function is as follows. Part of the twin-arginine translocation (Tat) system that transports large folded proteins containing a characteristic twin-arginine motif in their signal peptide across membranes. Together with TatC, TatB is part of a receptor directly interacting with Tat signal peptides. TatB may form an oligomeric binding site that transiently accommodates folded Tat precursor proteins before their translocation. The sequence is that of Sec-independent protein translocase protein TatB from Xanthomonas axonopodis pv. citri (strain 306).